The chain runs to 569 residues: Beta-lactamase-like protein 4 (569 aa).

A signal peptide spans 1 to 19 (MKYYLYLFLLFTFANLLYS). Asparagine 87, asparagine 172, asparagine 239, asparagine 240, asparagine 250, asparagine 299, asparagine 343, asparagine 412, asparagine 419, asparagine 436, asparagine 468, asparagine 509, and asparagine 535 each carry an N-linked (GlcNAc...) asparagine glycan.

Belongs to the beta-lactamase family.

It is found in the secreted. The sequence is that of Beta-lactamase-like protein 4 from Dictyostelium discoideum (Social amoeba).